A 126-amino-acid polypeptide reads, in one-letter code: Aspartate 1-decarboxylase (126 aa).

S25 functions as the Schiff-base intermediate with substrate; via pyruvic acid in the catalytic mechanism. S25 carries the post-translational modification Pyruvic acid (Ser). Substrate is bound at residue T57. The Proton donor role is filled by Y58. 73-75 (GAA) serves as a coordination point for substrate.

It belongs to the PanD family. Heterooctamer of four alpha and four beta subunits. The cofactor is pyruvate. In terms of processing, is synthesized initially as an inactive proenzyme, which is activated by self-cleavage at a specific serine bond to produce a beta-subunit with a hydroxyl group at its C-terminus and an alpha-subunit with a pyruvoyl group at its N-terminus.

Its subcellular location is the cytoplasm. The enzyme catalyses L-aspartate + H(+) = beta-alanine + CO2. Its pathway is cofactor biosynthesis; (R)-pantothenate biosynthesis; beta-alanine from L-aspartate: step 1/1. Its function is as follows. Catalyzes the pyruvoyl-dependent decarboxylation of aspartate to produce beta-alanine. This Yersinia pseudotuberculosis serotype IB (strain PB1/+) protein is Aspartate 1-decarboxylase.